A 293-amino-acid chain; its full sequence is Protein YIF1A (293 aa).

Positions 1–33 (MAYHSGYGAHGSKHRARAAPDPPPLFDDTSGGY) are disordered. Ala-2 carries the N-acetylalanine modification. Residues 2–138 (AYHSGYGAHG…PPRQDLNAPD (137 aa)) are Cytoplasmic-facing. Ser-12 is modified (phosphoserine). A helical membrane pass occupies residues 139-159 (LYIPTMAFITYVLLAGMALGI). Topologically, residues 160-174 (QKRFSPEVLGLCAST) are lumenal. A helical transmembrane segment spans residues 175–195 (ALVWVVMEVLALLLGLYLATV). Residues 196-203 (RSDLSTFH) are Cytoplasmic-facing. The chain crosses the membrane as a helical span at residues 204–226 (LLAYSGYKYVGMILSVLTGLLFG). Topologically, residues 227-229 (SDG) are lumenal. The chain crosses the membrane as a helical span at residues 230-249 (YYVALAWTSSALMYFIVRSL). Over 250-271 (RTAALGPDSMGGPVPRQRLQLY) the chain is Cytoplasmic. The chain crosses the membrane as a helical span at residues 272-292 (LTLGAAAFQPLIIYWLTFHLV).

It belongs to the YIF1 family. As to quaternary structure, interacts with YIPF5.

Its subcellular location is the endoplasmic reticulum membrane. The protein resides in the golgi apparatus membrane. It is found in the endoplasmic reticulum-Golgi intermediate compartment membrane. Its function is as follows. Possible role in transport between endoplasmic reticulum and Golgi. This Homo sapiens (Human) protein is Protein YIF1A (YIF1A).